The following is a 379-amino-acid chain: Stimulator of interferon genes protein (379 aa).

The Cytoplasmic portion of the chain corresponds to 1 to 17; sequence MPHSSLHPSIPCPRGHG. The segment at 1 to 190 is mediates interaction with ZDHHC1 and ZDHHC11; the sequence is MPHSSLHPSI…TYNQHYNNLL (190 aa). A helical membrane pass occupies residues 18 to 34; it reads AQKAALVLLSACLVTLW. Residue K20 forms a Glycyl lysine isopeptide (Lys-Gly) (interchain with G-Cter in ubiquitin) linkage. At 35 to 44 the chain is on the lumenal side; sequence GLGEPPEHTL. A helical membrane pass occupies residues 45–69; the sequence is RYLVLHLASLQLGLLLNGVCSLAEE. The Cytoplasmic portion of the chain corresponds to 70–91; it reads LRHIHSRYRGSYWRTVRACLGC. S-palmitoyl cysteine attachment occurs at residues C88 and C91. A helical membrane pass occupies residues 92–106; that stretch reads PLRRGALLLLSIYFY. Residues 107 to 116 lie on the Lumenal side of the membrane; that stretch reads YSLPNAVGPP. The helical transmembrane segment at 117–134 threads the bilayer; the sequence is FTWMLALLGLSQALNILL. Topologically, residues 135-379 are cytoplasmic; it reads GLKGLAPAEI…KPLPLRTDFS (245 aa). K150 is covalently cross-linked (Glycyl lysine isopeptide (Lys-Gly) (interchain with G-Cter in ubiquitin)). Residues 153–340 form a cyclic dinucleotide-binding domain (CBD) region; that stretch reads FNVAHGLAWS…RHLRQEEKEE (188 aa). 2 residues coordinate 2',3'-cGAMP: S162 and Y167. 3',3'-c-di-GMP contacts are provided by S162 and Y167. Y167 serves as a coordination point for 2',3'-cUAMP. T229 carries the phosphothreonine modification. K236 is covalently cross-linked (Glycyl lysine isopeptide (Lys-Gly) (interchain with G-Cter in ubiquitin)). Residue R238 participates in 2',3'-cGAMP binding. R238 contacts 2',3'-cUAMP. 3',3'-c-di-GMP-binding positions include 238–241 and T263; that span reads RVYS. Phosphoserine is present on S241. Residue T263 coordinates 2',3'-cGAMP. A 2',3'-cUAMP-binding site is contributed by T263. K338 participates in a covalent cross-link: Glycyl lysine isopeptide (Lys-Gly) (interchain with G-Cter in SUMO). The C-terminal tail (CTT) stretch occupies residues 340–379; it reads EVTVGSLKTSAVPSTSTMSQEPELLISGMEKPLPLRTDFS. The tract at residues 341-370 is disordered; that stretch reads VTVGSLKTSAVPSTSTMSQEPELLISGMEK. A compositionally biased stretch (polar residues) spans 345 to 359; the sequence is SLKTSAVPSTSTMSQ. T354 carries the post-translational modification Phosphothreonine. S355 is subject to Phosphoserine; by MAP3K7. T356 is subject to Phosphothreonine. Residues S358 and S366 each carry the phosphoserine; by TBK1 modification. Positions 363–366 match the pLxIS motif motif; it reads LLIS.

It belongs to the STING family. Homodimer; forms a homodimer in absence of cyclic nucleotide (c-di-GMP or cGAMP); 'Lys-63'-linked ubiquitination at Lys-150 is required for homodimerization. Homotetramer; in presence of cyclic nucleotide (c-di-GMP or cGAMP), forms tetramers and higher-order oligomers through side-by-side packing. Interacts (when phosphorylated) with IRF3; following activation and phosphorylation on the pLxIS motif by TBK1, recruits IRF3. Interacts with RIGI, MAVS and SSR2. Interacts with RNF5 and TRIM56. Interacts with TBK1; when homodimer, leading to subsequent production of IFN-beta. Interacts with IFIT1 and IFIT2. Interacts with TRIM29; this interaction induces STING1 ubiquitination and subsequent degradation. Associates with the MHC-II complex. Interacts with STEEP1; interaction takes place upon cGAMP-activation and STING1 phosphorylation by MAP3K7/TAK1 and promotes STING1 translocation to COPII vesicles. Interacts with SEC24A, SEC24B, and SEC24C; promoting translocation to COPII vesicles. Interacts (when ubiquitinated) with SQSTM1; leading to relocalization to autophagosomes. Interacts with SURF4. Interacts with HNRNPA2B1. Interacts with ZDHHC1; ZDHHC1 constitutively interacts with STING1 and in presence of DNA viruses activates it by promoting its cGAMP-induced oligomerization and the recruitment of downstream signaling components. Interacts with ZDHHC11; in presence of DNA viruses promotes the recruitment of IRF3 to STING1. Interacts with TOMM70. Interacts with isoform IFI16-beta of IFI16. Interacts with TAB1; promoting recruitment of TAB1 to the endoplasmic reticulum membrane and subsequent activation of MAP3K7/TAK1. Interacts (via transmembrane domain) with TMEM203. Interacts with DDX41. Interacts with TMEM120A (via C-terminal domain); regulates the trafficking of STING1 from the ER to the ER-Golgi intermediate compartment to elicit antiviral effects. As to quaternary structure, (Microbial infection) Interacts with human papillomavirus (HPV) protein E7. In terms of assembly, (Microbial infection) Interacts with adenovirus early E1A protein. (Microbial infection) Interacts with herpes simplex virus 1 protein ICP34.5; this interaction inhibits the intracellular DNA sensing pathway. As to quaternary structure, (Microbial infection) Interacts with Chikungunya virus non-structural protein 1; this interaction results in inhibition of cGAS-STING signaling and increased levels of palmitoylated nsP1 and protein stabilization. In terms of assembly, (Microbial infection) Interacts with human cytomegalovirus proteins UL94, UL42 and UL138; these interactions result in the inhibition of cGAS-STING signaling. (Microbial infection) Interacts with varivella virus protein 39; this interaction results in the inhibition of cGAS-STING signaling. Post-translationally, phosphorylation by TBK1 leads to activation and production of IFN-beta. Following cyclic nucleotide (c-di-GMP or cGAMP)-binding, activation and translocation from the endoplasmic reticulum, STING1 is phosphorylated by TBK1 at Ser-366 in the pLxIS motif. The phosphorylated pLxIS motif constitutes an IRF3-binding motif, leading to recruitment of the transcription factor IRF3 to induce type-I interferons and other cytokines. The phosphorylated pLxIS motif facilitates SENP2 recruitment during late phase of viral infection. Phosphorylated on tyrosine residues upon MHC-II aggregation. Dephosphorylation by PPP6C leads to inactivation and decreased production of IFN-beta. Phosphorylation at Ser-358 is also required to activate IRF3. Phosphorylation at Ser-355 by MAP3K7/TAK1 facilitates its interaction with STEEP1, promoting STING1 translocation to COPII vesicles. In terms of processing, ubiquitinated. Ubiquitinated via 'Lys-63'-linked ubiquitin chains in response to double-stranded DNA treatment, leading to relocalization to autophagosomes and subsequent degradation; this process is dependent on SQSTM1. 'Lys-63'-linked ubiquitination mediated by TRIM56 at Lys-150 promotes homodimerization and recruitment of the antiviral kinase TBK1 and subsequent production of IFN-beta. 'Lys-48'-linked polyubiquitination at Lys-150 occurring after viral infection is mediated by RNF5 and leads to proteasomal degradation. 'Lys-11'-linked polyubiquitination at Lys-150 by RNF26 leads to stabilize STING1: it protects STING1 from RNF5-mediated 'Lys-48'-linked polyubiquitination. 'Lys-33'-linked and 'Lys-48'-linked deubiquitinated by USP20; leading to its stabilization and promotion of innate antiviral response. 'Lys-48'-linked deubiquitinated by USP44; leading to its stabilization and promotion of innate antiviral response. Deubiquitinated by USP13; leading to inhibition of innate antiviral response. 'Lys-63'-linked deubiquitinated by USP49; leading to inhibition of the subsequent recruitment of TBK1 to the signaling complex. 'Lys-63'-linked ubiquitination mediated by RNF39 promotes the activation of the cGAS-STING pathway. MARCHF5-mediated ubiquitination prevents the oxidation-induced polymer formation. (Microbial infection) Deubiquitinated by Epstein-Barr virus BPLF1 on both 'Lys-48' and 'Lys-63'-linked ubiquitin chains; leading to inhibition of cGAS-STING signaling. Post-translationally, sumoylated at Lys-338 by TRIM38 during the early phase of viral infection, promoting its stability by preventing its relocalization to autophagosomes and subsequent degradation. Desumoylated by SENP2 during the late phase of viral infection. In terms of processing, palmitoylation takes place in the Golgi apparatus and creates a platform for the recruitment of TBK1. In terms of tissue distribution, ubiquitously expressed. Expressed in skin endothelial cells, alveolar type 2 pneumocytes, bronchial epithelium and alveolar macrophages.

Its subcellular location is the endoplasmic reticulum membrane. It is found in the cytoplasm. The protein resides in the perinuclear region. It localises to the endoplasmic reticulum-Golgi intermediate compartment membrane. The protein localises to the golgi apparatus membrane. Its subcellular location is the cytoplasmic vesicle. It is found in the autophagosome membrane. The protein resides in the mitochondrion outer membrane. It localises to the cell membrane. The enzyme catalyses H(+)(in) = H(+)(out). Its activity is regulated as follows. Activated upon binding to the hydrolysis-resistant 2'3'-cG(s)A(s)MP, an analog of cGAMP, in which phosphodiester linkages are replaced by phosphothioate linkages. Specifically inhibited by small-molecule H-151 (N-(4-ethylphenyl)-N'-1H-indol-3-yl-urea), which covalently binds Cys-91 and prevents palmitoylation and subsequent activation of STING1. In contrast to mouse protein, not activated by anticancer molecule 5,6-dimethylxanthenone 4-acetic acid (DMXAA). Inhibited by compound 18 ([(3S,4S)-2-(4-tert-butyl-3-chlorophenyl)-3-(2,3-dihydro-1,4-benzodioxin-6-yl)-7-fluoro-1-oxo-1,2,3,4-tetrahydroisoquinolin-4-yl]acetate), a competitive inhibitor with slow dissociation kinetics and good oral bioavailability. Homooligomerization and ability to promote the production of type I interferons is activated by C53, a small benzothiazinone-like compound that binds to the transmembrane regions. in the area of the putative pore. In contrast, compound C53, directly inhibits the proton channel activity and facilitate MAP1LC3B/LC3B lipidation and autophagosome formation. Facilitator of innate immune signaling that acts as a sensor of cytosolic DNA from bacteria and viruses and promotes the production of type I interferon (IFN-alpha and IFN-beta). Innate immune response is triggered in response to non-CpG double-stranded DNA from viruses and bacteria delivered to the cytoplasm. Acts by binding cyclic dinucleotides: recognizes and binds cyclic di-GMP (c-di-GMP), a second messenger produced by bacteria, cyclic UMP-AMP (2',3'-cUAMP), and cyclic GMP-AMP (cGAMP), a messenger produced by CGAS in response to DNA virus in the cytosol. Upon binding to c-di-GMP, cUAMP or cGAMP, STING1 oligomerizes, translocates from the endoplasmic reticulum and is phosphorylated by TBK1 on the pLxIS motif, leading to recruitment and subsequent activation of the transcription factor IRF3 to induce expression of type I interferon and exert a potent anti-viral state. Exhibits 2',3' phosphodiester linkage-specific ligand recognition: can bind both 2'-3' linked cGAMP (2'-3'-cGAMP) and 3'-3' linked cGAMP but is preferentially activated by 2'-3' linked cGAMP. The preference for 2'-3'-cGAMP, compared to other linkage isomers is probably due to the ligand itself, whichs adopts an organized free-ligand conformation that resembles the STING1-bound conformation and pays low energy costs in changing into the active conformation. In addition to promote the production of type I interferons, plays a direct role in autophagy. Following cGAMP-binding, STING1 buds from the endoplasmic reticulum into COPII vesicles, which then form the endoplasmic reticulum-Golgi intermediate compartment (ERGIC). The ERGIC serves as the membrane source for WIPI2 recruitment and LC3 lipidation, leading to formation of autophagosomes that target cytosolic DNA or DNA viruses for degradation by the lysosome. Promotes autophagy by acting as a proton channel that directs proton efflux from the Golgi to facilitate MAP1LC3B/LC3B lipidation. The autophagy- and interferon-inducing activities can be uncoupled and autophagy induction is independent of TBK1 phosphorylation. Autophagy is also triggered upon infection by bacteria: following c-di-GMP-binding, which is produced by live Gram-positive bacteria, promotes reticulophagy. May be involved in translocon function, the translocon possibly being able to influence the induction of type I interferons. May be involved in transduction of apoptotic signals via its association with the major histocompatibility complex class II (MHC-II). In terms of biological role, (Microbial infection) Antiviral activity is antagonized by oncoproteins, such as papillomavirus (HPV) protein E7 and adenovirus early E1A protein. Such oncoproteins prevent the ability to sense cytosolic DNA. This chain is Stimulator of interferon genes protein, found in Homo sapiens (Human).